The following is a 361-amino-acid chain: Chorismate synthase (361 aa).

NADP(+) is bound at residue Arg-47. FMN is bound by residues 124–126, Gly-286, 301–305, and Arg-327; these read RAS and KPTAT.

The protein belongs to the chorismate synthase family. As to quaternary structure, homotetramer. The cofactor is FMNH2.

The enzyme catalyses 5-O-(1-carboxyvinyl)-3-phosphoshikimate = chorismate + phosphate. The protein operates within metabolic intermediate biosynthesis; chorismate biosynthesis; chorismate from D-erythrose 4-phosphate and phosphoenolpyruvate: step 7/7. Functionally, catalyzes the anti-1,4-elimination of the C-3 phosphate and the C-6 proR hydrogen from 5-enolpyruvylshikimate-3-phosphate (EPSP) to yield chorismate, which is the branch point compound that serves as the starting substrate for the three terminal pathways of aromatic amino acid biosynthesis. This reaction introduces a second double bond into the aromatic ring system. The protein is Chorismate synthase of Akkermansia muciniphila (strain ATCC BAA-835 / DSM 22959 / JCM 33894 / BCRC 81048 / CCUG 64013 / CIP 107961 / Muc).